We begin with the raw amino-acid sequence, 319 residues long: Probable metallo-hydrolase YqjP (319 aa).

7 residues coordinate Zn(2+): His-67, His-69, Asp-71, His-72, His-165, Asp-184, and His-231.

Belongs to the metallo-beta-lactamase superfamily. The cofactor is Zn(2+).

The sequence is that of Probable metallo-hydrolase YqjP (yqjP) from Bacillus subtilis (strain 168).